Consider the following 398-residue polypeptide: Apolipoprotein L1 (398 aa).

An N-terminal signal peptide occupies residues 1–27; that stretch reads MEGAALLRVSVLCIWMSALFLGVGVRA. The segment covering 35–47 has biased composition (polar residues); the sequence is QQNVPSGTDTGDP. Residues 35-55 form a disordered region; sequence QQNVPSGTDTGDPQSKPLGDW. The N-linked (GlcNAc...) asparagine glycan is linked to Asn261. The interval 297–317 is disordered; it reads PHASASRPRVTEPISAESGEQ. Phosphoserine; by FAM20C occurs at positions 311 and 314.

This sequence belongs to the apolipoprotein L family. As to quaternary structure, in plasma, interacts with APOA1 and mainly associated with large high density lipoprotein particles. Post-translationally, phosphorylated by FAM20C in the extracellular medium. Plasma. Found on APOA-I-containing high density lipoprotein (HDL3). Expressed in pancreas, lung, prostate, liver, placenta and spleen.

It is found in the secreted. Its function is as follows. May play a role in lipid exchange and transport throughout the body. May participate in reverse cholesterol transport from peripheral cells to the liver. The protein is Apolipoprotein L1 (APOL1) of Homo sapiens (Human).